Reading from the N-terminus, the 154-residue chain is Myoglobin (154 aa).

The region spanning 2 to 148 (GLSDEEWKKV…FRNDMASRYK (147 aa)) is the Globin domain. His-65 is a binding site for nitrite. O2 is bound at residue His-65. His-94 provides a ligand contact to heme b.

Belongs to the globin family. As to quaternary structure, monomeric.

Its subcellular location is the cytoplasm. The protein localises to the sarcoplasm. It catalyses the reaction Fe(III)-heme b-[protein] + nitric oxide + H2O = Fe(II)-heme b-[protein] + nitrite + 2 H(+). It carries out the reaction H2O2 + AH2 = A + 2 H2O. In terms of biological role, monomeric heme protein which primary function is to store oxygen and facilitate its diffusion within muscle tissues. Reversibly binds oxygen through a pentacoordinated heme iron and enables its timely and efficient release as needed during periods of heightened demand. Depending on the oxidative conditions of tissues and cells, and in addition to its ability to bind oxygen, it also has a nitrite reductase activity whereby it regulates the production of bioactive nitric oxide. Under stress conditions, like hypoxia and anoxia, it also protects cells against reactive oxygen species thanks to its pseudoperoxidase activity. This chain is Myoglobin (MB), found in Varanus varius (Lace monitor lizard).